The primary structure comprises 610 residues: UvrABC system protein C (610 aa).

In terms of domain architecture, GIY-YIG spans 16 to 94 (SQPGVYRMYD…IKLYQPRYNV (79 aa)). A UVR domain is found at 204–239 (DQVLTQLIARMEKASQDLAFEEAARIRDQIQAVRRV).

This sequence belongs to the UvrC family. As to quaternary structure, interacts with UvrB in an incision complex.

The protein resides in the cytoplasm. In terms of biological role, the UvrABC repair system catalyzes the recognition and processing of DNA lesions. UvrC both incises the 5' and 3' sides of the lesion. The N-terminal half is responsible for the 3' incision and the C-terminal half is responsible for the 5' incision. The polypeptide is UvrABC system protein C (Salmonella dublin (strain CT_02021853)).